Consider the following 790-residue polypeptide: von Willebrand factor A domain-containing protein 2 (790 aa).

Positions 1-22 (MRLPWVNGILAFLSSQVLQCLC) are cleaved as a signal peptide. Positions 50-221 (DILILLDGSN…DAVNGLATSL (172 aa)) constitute a VWFA 1 domain. The EGF-like 1 domain occupies 295–332 (PDPCDSQPCKNGGTCIAEGQDKYHCVCPAGFGGDTECA). Disulfide bonds link C298/C309, C303/C319, and C321/C331. VWFA domains lie at 342–518 (DLLF…QKRI) and 532–702 (DLAF…EDSV). An EGF-like 2 domain is found at 713 to 748 (PVNLCKPNPCMNDGVCILRQGSYRCDCRGWDGPHCE). Intrachain disulfides connect C717-C728, C722-C737, and C739-C747. Residues 758–790 (WPQGLHSRSRQQRHSRKRRLKSVSGSRSSRKKP) form a disordered region. Over residues 764 to 778 (SRSRQQRHSRKRRLK) the composition is skewed to basic residues.

As to quaternary structure, forms monomers and multimers.

Its subcellular location is the secreted. The polypeptide is von Willebrand factor A domain-containing protein 2 (vwa2) (Xenopus laevis (African clawed frog)).